A 263-amino-acid chain; its full sequence is Nuclear egress protein 2 (263 aa).

The Perinuclear space portion of the chain corresponds to 1 to 235 (MASGKKLIDQ…STSLTGRCPS (235 aa)). A helical transmembrane segment spans residues 236–256 (WGAACALLLLSLAVGLMAILA). The Nuclear segment spans residues 257–263 (AKLMQWP).

Belongs to the herpesviridae NEC2 protein family. In terms of assembly, forms a heterohexameric complex with NEC1. Post-translationally, phosphorylated.

Its subcellular location is the host nucleus inner membrane. Its function is as follows. Plays an essential role in virion nuclear egress, the first step of virion release from infected cell. Within the host nucleus, NEC1 interacts with the newly formed capsid through the vertexes and directs it to the inner nuclear membrane by associating with NEC2. Induces the budding of the capsid at the inner nuclear membrane as well as its envelopment into the perinuclear space. There, the NEC1/NEC2 complex promotes the fusion of the enveloped capsid with the outer nuclear membrane and the subsequent release of the viral capsid into the cytoplasm where it will reach the secondary budding sites in the host Golgi or trans-Golgi network. This Connochaetes taurinus (Blue wildebeest) protein is Nuclear egress protein 2.